Consider the following 238-residue polypeptide: tRNA (guanine-N(7)-)-methyltransferase (238 aa).

4 residues coordinate S-adenosyl-L-methionine: Glu68, Glu93, Asp120, and Asp143. Asp143 is an active-site residue. Substrate contacts are provided by residues Lys147, Asp179, and 216-219 (TKFE).

It belongs to the class I-like SAM-binding methyltransferase superfamily. TrmB family.

It catalyses the reaction guanosine(46) in tRNA + S-adenosyl-L-methionine = N(7)-methylguanosine(46) in tRNA + S-adenosyl-L-homocysteine. It participates in tRNA modification; N(7)-methylguanine-tRNA biosynthesis. Catalyzes the formation of N(7)-methylguanine at position 46 (m7G46) in tRNA. This Ectopseudomonas mendocina (strain ymp) (Pseudomonas mendocina) protein is tRNA (guanine-N(7)-)-methyltransferase.